The primary structure comprises 799 residues: Pentatricopeptide repeat-containing protein At2g26790, mitochondrial (799 aa).

A mitochondrion-targeting transit peptide spans 1-27 (MRFSPTFFLLSQLRLTRRRAATSSRFY). PPR repeat units follow at residues 145-179 (LIRV…DCVV), 180-214 (DIKA…GLCA), 215-250 (NEYT…GYKT), 251-278 (FING…KYLA), 282-316 (LRAV…GFGL), 317-351 (DVYA…GLKV), 352-386 (NCVI…NIFL), 387-421 (DRVC…GIVP), 422-456 (DVIN…GMSP), 457-491 (DLIT…GPKP), 492-522 (NAVT…LEQK), 523-553 (CPEN…LEYP), 555-589 (RKSV…RVEP), 590-624 (GRSM…GLIP), 625-659 (DLFT…GIKP), 660-695 (DVVT…KASE), 708-742 (DVVC…GLEP), and 743-777 (DMVA…YNIP).

It belongs to the PPR family. P subfamily.

Its subcellular location is the mitochondrion. This Arabidopsis thaliana (Mouse-ear cress) protein is Pentatricopeptide repeat-containing protein At2g26790, mitochondrial.